Reading from the N-terminus, the 539-residue chain is CTP synthase (539 aa).

Positions 1–272 (MTLRSKMTKY…AQIILSHFKI (272 aa)) are amidoligase domain. S19 contributes to the CTP binding site. Residue S19 participates in UTP binding. 20–25 (GLGKGV) serves as a coordination point for ATP. Y60 lines the L-glutamine pocket. D77 provides a ligand contact to ATP. Mg(2+) is bound by residues D77 and E147. CTP is bound by residues 154–156 (DIE), 193–198 (KSKPTQ), and K229. UTP-binding positions include 193 to 198 (KSKPTQ) and K229. The region spanning 298–539 (KILMVGKYVE…SFLRVLIKNN (242 aa)) is the Glutamine amidotransferase type-1 domain. G360 serves as a coordination point for L-glutamine. C387 (nucleophile; for glutamine hydrolysis) is an active-site residue. L-glutamine-binding positions include 388-391 (LGFQ), E410, and R469. Catalysis depends on residues H514 and E516.

Belongs to the CTP synthase family. Homotetramer.

The enzyme catalyses UTP + L-glutamine + ATP + H2O = CTP + L-glutamate + ADP + phosphate + 2 H(+). The catalysed reaction is L-glutamine + H2O = L-glutamate + NH4(+). It catalyses the reaction UTP + NH4(+) + ATP = CTP + ADP + phosphate + 2 H(+). It functions in the pathway pyrimidine metabolism; CTP biosynthesis via de novo pathway; CTP from UDP: step 2/2. With respect to regulation, allosterically activated by GTP, when glutamine is the substrate; GTP has no effect on the reaction when ammonia is the substrate. The allosteric effector GTP functions by stabilizing the protein conformation that binds the tetrahedral intermediate(s) formed during glutamine hydrolysis. Inhibited by the product CTP, via allosteric rather than competitive inhibition. In terms of biological role, catalyzes the ATP-dependent amination of UTP to CTP with either L-glutamine or ammonia as the source of nitrogen. Regulates intracellular CTP levels through interactions with the four ribonucleotide triphosphates. The polypeptide is CTP synthase (Mycoplasmopsis pulmonis (strain UAB CTIP) (Mycoplasma pulmonis)).